The sequence spans 713 residues: MKKISKLTTALALSLSLALSLLGPAHAAPDTSVSNKQNFSTDVIYQIFTDRFSDGNPANNPTGPAFDGTCTNLRLYCGGDWQGIINKINDGYLTGMGVTAIWISQPVENIYSVINYSGVNNTAYHGYWARDFKKTNPAYGTIADFQNLIAAAHAKNIKVIIDFAPNHTSPASLDQPSFAENGKLYNNGRDEGGYTNDTHNLFHHNGGTDFSTTENGIYKNLYDLADLNHNNSTVDTYLKDAIKMWLDLGIDGIRMDAVKHMPFGWQKSFMATVNNYKPVFTFGEWFLGVNEVSAENHKFANVSGMSLLDFRFAQKVRQVFKDNTDNMYGLKSMLEGSATDYAQMEDQVTFIDNHDMERFHNNSANRRKLEQALAFTLTSRGVPAIYYGTEQYMSGGNDPDNRARIPSFSTTTTAYQVSKKLAPLRKSNPAIAYGTTQERWINNDVLIYERKFGNNVAVIAVNRNVNTSASITGLVTSLPAGSYTDVLGGLLNGNNLTVGSGGSASIFTLAAGGTAVWQYTTAVTAPTIGHVGPMMAKPGAAVTIDGRGFGATKGTVYFGTTAVTGANITAWEDTQIKVKIPAVAGGVYNIKIANSAGTSSNVHDNFEVLSGDQVSVRFVVNNATTALGQNVYLAGSVSELGNWDPAKAIGPLYNQVIYQYPTWYYDVTVPAGKTIEFKFLKKQGSTVTWEGGSNHTFTAPTSGTATINVNWQP.

Residues 1–27 (MKKISKLTTALALSLSLALSLLGPAHA) form the signal peptide. The tract at residues 28–165 (APDTSVSNKQ…NIKVIIDFAP (138 aa)) is A1. Residues aspartate 54, asparagine 56, asparagine 59, and asparagine 60 each coordinate Ca(2+). Cysteine 70 and cysteine 77 are joined by a disulfide. Ca(2+)-binding residues include glycine 78 and aspartate 80. 127–128 (YW) serves as a coordination point for substrate. Position 166 (asparagine 166) interacts with Ca(2+). Positions 166-229 (NHTSPASLDQ…NLYDLADLNH (64 aa)) are b. Position 167 (histidine 167) interacts with substrate. Position 217 (isoleucine 217) interacts with Ca(2+). 220–223 (NLYD) contributes to the substrate binding site. Aspartate 226 is a Ca(2+) binding site. The interval 230 to 433 (NNSTVDTYLK…LRKSNPAIAY (204 aa)) is A2. Arginine 254 contacts substrate. Catalysis depends on aspartate 256, which acts as the Nucleophile. 259-260 (KH) provides a ligand contact to substrate. Histidine 260 contacts Ca(2+). Catalysis depends on glutamate 284, which acts as the Proton donor. Substrate is bound by residues histidine 354, aspartate 398, and arginine 402. A c region spans residues 434-522 (GTTQERWINN…GTAVWQYTTA (89 aa)). Residues 523-609 (VTAPTIGHVG…SNVHDNFEVL (87 aa)) form a d region. One can recognise an IPT/TIG domain in the interval 526–607 (PTIGHVGPMM…TSSNVHDNFE (82 aa)). Residues 608-713 (VLSGDQVSVR…TATINVNWQP (106 aa)) form the CBM20 domain. Positions 610-713 (SGDQVSVRFV…TATINVNWQP (104 aa)) are e.

The protein belongs to the glycosyl hydrolase 13 family. In terms of assembly, monomer. Requires Ca(2+) as cofactor.

It localises to the secreted. It catalyses the reaction Cyclizes part of a (1-&gt;4)-alpha-D-glucan chain by formation of a (1-&gt;4)-alpha-D-glucosidic bond.. The sequence is that of Cyclomaltodextrin glucanotransferase (cgt) from Bacillus sp. (strain 17-1).